We begin with the raw amino-acid sequence, 49 residues long: Large ribosomal subunit protein bL33A (49 aa).

Belongs to the bacterial ribosomal protein bL33 family.

This is Large ribosomal subunit protein bL33A from Bacillus cytotoxicus (strain DSM 22905 / CIP 110041 / 391-98 / NVH 391-98).